The primary structure comprises 962 residues: Nonsense-mediated mRNA decay factor SMG8 (962 aa).

The disordered stretch occupies residues 634–661; that stretch reads RSPEISSQIASSGLSSRSNSTSSGTSSA. The span at 639–661 shows a compositional bias: low complexity; sequence SSQIASSGLSSRSNSTSSGTSSA.

The protein belongs to the SMG8 family.

Functionally, involved in nonsense-mediated decay (NMD) of mRNAs containing premature stop codons. Probable component of kinase complex containing nonC and recruited to stalled ribosomes. The polypeptide is Nonsense-mediated mRNA decay factor SMG8 (Drosophila virilis (Fruit fly)).